Consider the following 513-residue polypeptide: Light-independent protochlorophyllide reductase subunit B (513 aa).

Aspartate 36 is a binding site for [4Fe-4S] cluster. The Proton donor role is filled by aspartate 299. 434 to 435 provides a ligand contact to substrate; sequence GM.

It belongs to the ChlB/BchB/BchZ family. Protochlorophyllide reductase is composed of three subunits; ChlL, ChlN and ChlB. Forms a heterotetramer of two ChlB and two ChlN subunits. [4Fe-4S] cluster serves as cofactor.

The protein localises to the plastid. It localises to the chloroplast. The enzyme catalyses chlorophyllide a + oxidized 2[4Fe-4S]-[ferredoxin] + 2 ADP + 2 phosphate = protochlorophyllide a + reduced 2[4Fe-4S]-[ferredoxin] + 2 ATP + 2 H2O. It functions in the pathway porphyrin-containing compound metabolism; chlorophyll biosynthesis (light-independent). In terms of biological role, component of the dark-operative protochlorophyllide reductase (DPOR) that uses Mg-ATP and reduced ferredoxin to reduce ring D of protochlorophyllide (Pchlide) to form chlorophyllide a (Chlide). This reaction is light-independent. The NB-protein (ChlN-ChlB) is the catalytic component of the complex. This chain is Light-independent protochlorophyllide reductase subunit B, found in Cycas taitungensis (Prince sago).